The chain runs to 326 residues: Glutaminase 2 (326 aa).

Substrate-binding residues include serine 73, asparagine 125, glutamate 169, asparagine 176, tyrosine 200, tyrosine 252, and valine 270.

It belongs to the glutaminase family. Homotetramer.

The catalysed reaction is L-glutamine + H2O = L-glutamate + NH4(+). This chain is Glutaminase 2, found in Bacillus anthracis.